Reading from the N-terminus, the 146-residue chain is Hemoglobin subunit beta-1 (146 aa).

The region spanning 2–146 (KWTDKERAVI…VVSALGKQYC (145 aa)) is the Globin domain. Heme b contacts are provided by H63 and H92.

Belongs to the globin family. In terms of assembly, heterotetramer of two alpha chains and two beta chains. Red blood cells.

Its function is as follows. Involved in oxygen transport from gills to the various peripheral tissues. The sequence is that of Hemoglobin subunit beta-1 from Lycodes reticulatus (Arctic eelpout).